The chain runs to 141 residues: N,N-dimethylformamidase alpha subunit (141 aa).

In terms of assembly, heterotetramer of two DmfA1 (alpha) and two DmfA2 (beta) subunits.

The enzyme catalyses N,N-dimethylformamide + H2O = dimethylamine + formate. Functionally, hydrolyzes N,N-dimethylformamide, and to a lesser extent N,N-dimethylacetamide and N,N-diethylacetamide. Has no activity against the substituted amides N-methylformamide, N-ethylformamide, N-ethylformamide and N-methylacetamide or the unsubstituted amides formamide, nicotinamide, acetoamide, benzamide, acetamide and acrylamide. In Paracoccus aminophilus, this protein is N,N-dimethylformamidase alpha subunit.